The primary structure comprises 483 residues: Replication factor C large subunit (483 aa).

Residue 44–51 (GSPGVGKT) participates in ATP binding. Residues 415-483 (AVDHGGGIFA…DGQAGLSDFM (69 aa)) form a disordered region. Residues 430-443 (AQSDTESDDDDDGD) show a composition bias toward acidic residues. Positions 451-463 (DEPKEESVNREQS) are enriched in basic and acidic residues.

Belongs to the activator 1 small subunits family. RfcL subfamily. In terms of assembly, heteromultimer composed of small subunits (RfcS) and large subunits (RfcL).

Part of the RFC clamp loader complex which loads the PCNA sliding clamp onto DNA. This chain is Replication factor C large subunit, found in Natronomonas pharaonis (strain ATCC 35678 / DSM 2160 / CIP 103997 / JCM 8858 / NBRC 14720 / NCIMB 2260 / Gabara) (Halobacterium pharaonis).